We begin with the raw amino-acid sequence, 431 residues long: tRNA-specific 2-thiouridylase MnmA (431 aa).

Residues 35–42 (AMSGGVDS) and Leu-61 contribute to the ATP site. The active-site Nucleophile is the Cys-129. Residues Cys-129 and Cys-226 are joined by a disulfide bond. Residue Gly-153 coordinates ATP. Residues 176–178 (RDQ) are interaction with tRNA. Residue Cys-226 is the Cysteine persulfide intermediate of the active site. Residues 407–431 (PKPPNEDLLDTNESSDLVSPKRSAC) form a disordered region.

This sequence belongs to the MnmA/TRMU family.

It is found in the cytoplasm. It carries out the reaction S-sulfanyl-L-cysteinyl-[protein] + uridine(34) in tRNA + AH2 + ATP = 2-thiouridine(34) in tRNA + L-cysteinyl-[protein] + A + AMP + diphosphate + H(+). Its function is as follows. Catalyzes the 2-thiolation of uridine at the wobble position (U34) of tRNA, leading to the formation of s(2)U34. The chain is tRNA-specific 2-thiouridylase MnmA from Beijerinckia indica subsp. indica (strain ATCC 9039 / DSM 1715 / NCIMB 8712).